Here is a 215-residue protein sequence, read N- to C-terminus: Cytochrome b6 (215 aa).

The helical transmembrane segment at 32–52 threads the bilayer; sequence IFYCLGGITLVCFLIQFATGF. Cysteine 35 lines the heme c pocket. Histidine 86 and histidine 100 together coordinate heme b. 3 consecutive transmembrane segments (helical) span residues 90–110, 116–136, and 186–206; these read ASMMVLMMILHTFRVYLTGGF, LTWVTGVILAVLTVSFGVTGY, and LHTFVLPWLTAVFMTMHFLMI. The heme b site is built by histidine 187 and histidine 202.

The protein belongs to the cytochrome b family. PetB subfamily. As to quaternary structure, the 4 large subunits of the cytochrome b6-f complex are cytochrome b6, subunit IV (17 kDa polypeptide, PetD), cytochrome f and the Rieske protein, while the 4 small subunits are PetG, PetL, PetM and PetN. The complex functions as a dimer. Heme b serves as cofactor. It depends on heme c as a cofactor.

It localises to the cellular thylakoid membrane. Its function is as follows. Component of the cytochrome b6-f complex, which mediates electron transfer between photosystem II (PSII) and photosystem I (PSI), cyclic electron flow around PSI, and state transitions. This Synechococcus sp. (strain JA-3-3Ab) (Cyanobacteria bacterium Yellowstone A-Prime) protein is Cytochrome b6.